The chain runs to 188 residues: MATYTTSDFKPGLKFMQDGEPCVIIENEFVKPGKGQAFTRTRIRKLISGKVLDVNFKSGTSVEAADVMDLNLTYSYKDEAFWYFMHPETFEQYSADAKAVGDAEKWLLDQADCIVTLWNGAPITITPPNFVELEVVETDPGLKGDTAGTGGKPATLSTGAVVKVPLFVQIGEVIKVDTRSGEYVSRVK.

The residue at position 34 (Lys-34) is an N6-(3,6-diaminohexanoyl)-5-hydroxylysine.

It belongs to the elongation factor P family. May be beta-lysylated on the epsilon-amino group of Lys-34 by the combined action of EpmA and EpmB, and then hydroxylated on the C5 position of the same residue by EpmC (if this protein is present). Lysylation is critical for the stimulatory effect of EF-P on peptide-bond formation. The lysylation moiety may extend toward the peptidyltransferase center and stabilize the terminal 3-CCA end of the tRNA. Hydroxylation of the C5 position on Lys-34 may allow additional potential stabilizing hydrogen-bond interactions with the P-tRNA.

The protein localises to the cytoplasm. It participates in protein biosynthesis; polypeptide chain elongation. In terms of biological role, involved in peptide bond synthesis. Alleviates ribosome stalling that occurs when 3 or more consecutive Pro residues or the sequence PPG is present in a protein, possibly by augmenting the peptidyl transferase activity of the ribosome. Modification of Lys-34 is required for alleviation. This Histophilus somni (strain 129Pt) (Haemophilus somnus) protein is Elongation factor P.